Reading from the N-terminus, the 540-residue chain is RNA exonuclease 3 (540 aa).

The segment at 7–34 (QFKHIVCPFLRTGRKCQSRNCFFSHDFQ) adopts a C3H1-type zinc-finger fold. Positions 382-529 (HCALDCELCY…EDAVSALQLV (148 aa)) constitute an Exonuclease domain.

Belongs to the REXO1/REXO3 family.

It localises to the cytoplasm. The protein localises to the nucleus. Functionally, 3' to 5' exoribonuclease required for proper 3' end maturation of MRP RNA and of the U5L snRNA. This Schizosaccharomyces pombe (strain 972 / ATCC 24843) (Fission yeast) protein is RNA exonuclease 3 (rex3).